The sequence spans 47 residues: Defensin Ec-AMP-D1 (47 aa).

4 disulfide bridges follow: cysteine 3–cysteine 47, cysteine 14–cysteine 34, cysteine 20–cysteine 41, and cysteine 24–cysteine 43.

Functionally, has antifungal activity. Inhibits spore germination in F.graminearum (IC(50)=15 ug/ml), F.oxysporum (IC(50)=102 ug/ml), F.verticillioides (IC(50)=8.5 ug/ml) and D.maydis (IC(50)=12.5 ug/ml), but not in C.graminicola, B.cinerea and H.sativum at concentrations below 30 ug/ml. Inhibits hyphal development in P.infestans (IC(50)=25.5 ug/ml), but not release of zoospores. At concentrations above 100 ug/ml, induces morphological changes such as lysis of hyphae and sporangia in P.infestans. The protein is Defensin Ec-AMP-D1 of Echinochloa crus-galli (Barnyard grass).